The chain runs to 295 residues: ATP-dependent (S)-NAD(P)H-hydrate dehydratase (295 aa).

The YjeF C-terminal domain maps to Leu-9–Leu-289. (6S)-NADPHX contacts are provided by residues Gly-109 and Asn-162–Arg-168. ATP-binding positions include Lys-193 to Asp-197 and Gly-214 to Gly-223. Asp-224 is a (6S)-NADPHX binding site.

It belongs to the NnrD/CARKD family. Mg(2+) is required as a cofactor.

It catalyses the reaction (6S)-NADHX + ATP = ADP + phosphate + NADH + H(+). The catalysed reaction is (6S)-NADPHX + ATP = ADP + phosphate + NADPH + H(+). Functionally, catalyzes the dehydration of the S-form of NAD(P)HX at the expense of ATP, which is converted to ADP. Together with NAD(P)HX epimerase, which catalyzes the epimerization of the S- and R-forms, the enzyme allows the repair of both epimers of NAD(P)HX, a damaged form of NAD(P)H that is a result of enzymatic or heat-dependent hydration. The sequence is that of ATP-dependent (S)-NAD(P)H-hydrate dehydratase from Anopheles darlingi (Mosquito).